Here is a 187-residue protein sequence, read N- to C-terminus: Ribose 1,5-bisphosphate phosphokinase PhnN (187 aa).

9-16 (GPSGSGKD) is a binding site for ATP.

This sequence belongs to the ribose 1,5-bisphosphokinase family.

It carries out the reaction alpha-D-ribose 1,5-bisphosphate + ATP = 5-phospho-alpha-D-ribose 1-diphosphate + ADP. Its pathway is metabolic intermediate biosynthesis; 5-phospho-alpha-D-ribose 1-diphosphate biosynthesis; 5-phospho-alpha-D-ribose 1-diphosphate from D-ribose 5-phosphate (route II): step 3/3. In terms of biological role, catalyzes the phosphorylation of ribose 1,5-bisphosphate to 5-phospho-D-ribosyl alpha-1-diphosphate (PRPP). In Desulfomicrobium baculatum (strain DSM 4028 / VKM B-1378 / X) (Desulfovibrio baculatus), this protein is Ribose 1,5-bisphosphate phosphokinase PhnN.